The primary structure comprises 366 residues: Beta sliding clamp (366 aa).

Belongs to the beta sliding clamp family. In terms of assembly, forms a ring-shaped head-to-tail homodimer around DNA which binds and tethers DNA polymerases and other proteins to the DNA. The DNA replisome complex has a single clamp-loading complex (3 tau and 1 each of delta, delta', psi and chi subunits) which binds 3 Pol III cores (1 core on the leading strand and 2 on the lagging strand) each with a beta sliding clamp dimer. Additional proteins in the replisome are other copies of gamma, psi and chi, Ssb, DNA helicase and RNA primase.

The protein resides in the cytoplasm. Confers DNA tethering and processivity to DNA polymerases and other proteins. Acts as a clamp, forming a ring around DNA (a reaction catalyzed by the clamp-loading complex) which diffuses in an ATP-independent manner freely and bidirectionally along dsDNA. Initially characterized for its ability to contact the catalytic subunit of DNA polymerase III (Pol III), a complex, multichain enzyme responsible for most of the replicative synthesis in bacteria; Pol III exhibits 3'-5' exonuclease proofreading activity. The beta chain is required for initiation of replication as well as for processivity of DNA replication. The polypeptide is Beta sliding clamp (dnaN) (Haemophilus influenzae (strain ATCC 51907 / DSM 11121 / KW20 / Rd)).